Consider the following 533-residue polypeptide: Beta-glucosidase 22 (533 aa).

A signal peptide spans M1 to A24. A glycan (N-linked (GlcNAc...) asparagine) is linked at N41. A beta-D-glucoside is bound by residues Q61, H161, and D206–E207. The Proton donor role is filled by E207. A disulfide bridge connects residues C226 and C234. N233 and N238 each carry an N-linked (GlcNAc...) asparagine glycan. Positions 350 and 421 each coordinate a beta-D-glucoside. Catalysis depends on E421, which acts as the Nucleophile. N435 carries an N-linked (GlcNAc...) asparagine glycan. 2 residues coordinate a beta-D-glucoside: W466 and F482.

The protein belongs to the glycosyl hydrolase 1 family.

The catalysed reaction is Hydrolysis of terminal, non-reducing beta-D-glucosyl residues with release of beta-D-glucose.. This is Beta-glucosidase 22 (BGLU22) from Oryza sativa subsp. japonica (Rice).